A 264-amino-acid chain; its full sequence is Protein FAM228B (264 aa).

It belongs to the FAM228 family.

This is Protein FAM228B (FAM228B) from Bos taurus (Bovine).